We begin with the raw amino-acid sequence, 469 residues long: MTVRTRFAPSPTGYLHVGGVRTALFSWLYARKHGGRFILRIEDTDRERSSMESVNAILEGMTWLGLEYDEGPFYQTNRFSRYREIIEQLLASNHAYLCYCTREELASMRAEQMARKEKPRYDGRCRERHSPREGVSPVVRFKSPLEGRVVIRDLVRGMVIFQNNELDDLVLARTDGTPTYNLTVVVDDMDMGMTHVIRGDDHLNNTPRQSNIFYALGKEPPVYAHVPMILGPDRQRLSKRHGAVSVMNYREAGYLPEALLNYLVRLGWSHGDQEIFSVAEMIKLFDIEDVNQSASTFNSEKLLWLNQQYIKNSAPEHIAHHLSWHLGQLGIDPSKGPDLAAVVKAQQERSKTLLEMAHNSAPFYREFEAYEETAARKHLNASVLGPLRDLRERFKEAQSWVAPALHEIILATVESHHLKLGKLAQPLRVAIMGRPISPPIDVTLELMGQATTLARIDRALAWIDHRSNA.

The 'HIGH' region motif lies at 9–19 (PSPTGYLHVGG). 4 residues coordinate Zn(2+): cysteine 98, cysteine 100, cysteine 125, and glutamate 127. The short motif at 236–240 (RLSKR) is the 'KMSKS' region element. Lysine 239 is a binding site for ATP.

This sequence belongs to the class-I aminoacyl-tRNA synthetase family. Glutamate--tRNA ligase type 1 subfamily. Monomer. Zn(2+) serves as cofactor.

Its subcellular location is the cytoplasm. The enzyme catalyses tRNA(Glu) + L-glutamate + ATP = L-glutamyl-tRNA(Glu) + AMP + diphosphate. Functionally, catalyzes the attachment of glutamate to tRNA(Glu) in a two-step reaction: glutamate is first activated by ATP to form Glu-AMP and then transferred to the acceptor end of tRNA(Glu). This is Glutamate--tRNA ligase 1 from Nitrosococcus oceani (strain ATCC 19707 / BCRC 17464 / JCM 30415 / NCIMB 11848 / C-107).